Here is a 241-residue protein sequence, read N- to C-terminus: Ubiquinone biosynthesis O-methyltransferase (241 aa).

The S-adenosyl-L-methionine site is built by Arg46, Gly66, Asp87, and Met131.

The protein belongs to the methyltransferase superfamily. UbiG/COQ3 family.

It catalyses the reaction a 3-demethylubiquinol + S-adenosyl-L-methionine = a ubiquinol + S-adenosyl-L-homocysteine + H(+). The catalysed reaction is a 3-(all-trans-polyprenyl)benzene-1,2-diol + S-adenosyl-L-methionine = a 2-methoxy-6-(all-trans-polyprenyl)phenol + S-adenosyl-L-homocysteine + H(+). It participates in cofactor biosynthesis; ubiquinone biosynthesis. Its function is as follows. O-methyltransferase that catalyzes the 2 O-methylation steps in the ubiquinone biosynthetic pathway. This Bordetella bronchiseptica (strain ATCC BAA-588 / NCTC 13252 / RB50) (Alcaligenes bronchisepticus) protein is Ubiquinone biosynthesis O-methyltransferase.